The primary structure comprises 182 residues: Small ribosomal subunit protein uS4c (182 aa).

The S4 RNA-binding domain occupies 82-143; that stretch reads MRLDNILFRL…KQRSKALIQN (62 aa).

The protein belongs to the universal ribosomal protein uS4 family. As to quaternary structure, part of the 30S ribosomal subunit. Contacts protein S5. The interaction surface between S4 and S5 is involved in control of translational fidelity.

The protein localises to the plastid. It is found in the chloroplast. One of the primary rRNA binding proteins, it binds directly to 16S rRNA where it nucleates assembly of the body of the 30S subunit. Its function is as follows. With S5 and S12 plays an important role in translational accuracy. The sequence is that of Small ribosomal subunit protein uS4c (rps4) from Libertia formosa (Snowy mermaid).